Reading from the N-terminus, the 581-residue chain is Phosphoinositide phospholipase C 2 (581 aa).

In terms of domain architecture, EF-hand-like spans 26–102 (EIKTIFEKYS…NPPLALHKVH (77 aa)). Positions 103–248 (HDMDAPISHY…LKRRIIISTK (146 aa)) constitute a PI-PLC X-box domain. Catalysis depends on residues histidine 118 and histidine 164. The interval 279-314 (PSFIQRNKSEAKDDLDGNDDDDDDDDEDKSKINAPP) is disordered. The segment covering 294 to 305 (DGNDDDDDDDDE) has biased composition (acidic residues). The 117-residue stretch at 317 to 433 (KHLIAIHAGK…GYIKKPDLLL (117 aa)) folds into the PI-PLC Y-box domain. The region spanning 434-563 (KSGSDSDIFD…EGIRAFPLHS (130 aa)) is the C2 domain.

Ca(2+) serves as cofactor. Phosphorylation level varies significantly during early response to bacterial elicitor. Expressed in roots, shoots, leaves and flowers.

It localises to the cell membrane. It catalyses the reaction a 1,2-diacyl-sn-glycero-3-phospho-(1D-myo-inositol-4,5-bisphosphate) + H2O = 1D-myo-inositol 1,4,5-trisphosphate + a 1,2-diacyl-sn-glycerol + H(+). Functionally, the production of the second messenger molecules diacylglycerol (DAG) and inositol 1,4,5-trisphosphate (IP3) is mediated by activated phosphatidylinositol-specific phospholipase C enzymes. At physiological calcium concentration, the preferred substrate is phosphatidylinositol 4,5-bisphosphate versus phosphatidylinositol. The sequence is that of Phosphoinositide phospholipase C 2 (PLC2) from Arabidopsis thaliana (Mouse-ear cress).